The following is a 387-amino-acid chain: Phosphoglycerate kinase (387 aa).

Residues 21–23 (DLN), arginine 36, 59–62 (HLGR), arginine 113, and arginine 146 each bind substrate. Residues lysine 197, glutamate 314, and 340-343 (GGDT) each bind ATP.

This sequence belongs to the phosphoglycerate kinase family. In terms of assembly, monomer.

The protein localises to the cytoplasm. The catalysed reaction is (2R)-3-phosphoglycerate + ATP = (2R)-3-phospho-glyceroyl phosphate + ADP. It participates in carbohydrate degradation; glycolysis; pyruvate from D-glyceraldehyde 3-phosphate: step 2/5. The sequence is that of Phosphoglycerate kinase from Aliivibrio fischeri (strain ATCC 700601 / ES114) (Vibrio fischeri).